Consider the following 822-residue polypeptide: Probable phosphoketolase (822 aa).

This sequence belongs to the XFP family. Requires thiamine diphosphate as cofactor.

This Lactococcus lactis subsp. lactis (strain IL1403) (Streptococcus lactis) protein is Probable phosphoketolase.